A 408-amino-acid chain; its full sequence is LL-diaminopimelate aminotransferase (408 aa).

2 residues coordinate substrate: Tyr15 and Gly42. Pyridoxal 5'-phosphate is bound by residues Tyr72, 108 to 109, Tyr132, Asn187, Tyr218, and 246 to 248; these read SK and SFS. Substrate is bound by residues Lys109, Tyr132, and Asn187. Residue Lys249 is modified to N6-(pyridoxal phosphate)lysine. Residues Arg257 and Asn292 each coordinate pyridoxal 5'-phosphate. Residues Asn292 and Arg388 each contribute to the substrate site.

It belongs to the class-I pyridoxal-phosphate-dependent aminotransferase family. LL-diaminopimelate aminotransferase subfamily. Homodimer. The cofactor is pyridoxal 5'-phosphate.

It catalyses the reaction (2S,6S)-2,6-diaminopimelate + 2-oxoglutarate = (S)-2,3,4,5-tetrahydrodipicolinate + L-glutamate + H2O + H(+). Its pathway is amino-acid biosynthesis; L-lysine biosynthesis via DAP pathway; LL-2,6-diaminopimelate from (S)-tetrahydrodipicolinate (aminotransferase route): step 1/1. In terms of biological role, involved in the synthesis of meso-diaminopimelate (m-DAP or DL-DAP), required for both lysine and peptidoglycan biosynthesis. Catalyzes the direct conversion of tetrahydrodipicolinate to LL-diaminopimelate. The protein is LL-diaminopimelate aminotransferase of Parasynechococcus marenigrum (strain WH8102).